The primary structure comprises 146 residues: Benzoylsuccinyl-CoA thiolase subunit BbsA (146 aa).

Positions 42, 45, 55, and 58 each coordinate Zn(2+).

The protein belongs to the BbsA family. Heterotetramer composed of two BbsA subunits and two BbsB subunits. Both BbsA and BbsB are essential for enzymatic activity.

The enzyme catalyses (S)-2-benzoylsuccinyl-CoA + CoA = benzoyl-CoA + succinyl-CoA. Its pathway is xenobiotic degradation; toluene degradation. Its function is as follows. Component of the BbsAB thiolase complex, which catalyzes the thiolytic cleavage of (S)-2-benzoylsuccinyl-CoA to succinyl-CoA and benzoyl-CoA, the final step of anaerobic toluene metabolism. The BbsA subunit critically contributes to an induced-fit process for productive binding of a CoA substrate into the active site of BbsB. In Geobacter metallireducens (strain ATCC 53774 / DSM 7210 / GS-15), this protein is Benzoylsuccinyl-CoA thiolase subunit BbsA.